The chain runs to 253 residues: Proteasome subunit alpha type-3 (253 aa).

The segment at 230-253 is disordered; the sequence is ELTEKARKAGDAANKDEDSDNETH. Positions 231 to 253 are enriched in basic and acidic residues; sequence LTEKARKAGDAANKDEDSDNETH. Ser248 carries the post-translational modification Phosphoserine.

This sequence belongs to the peptidase T1A family. In terms of assembly, the 26S proteasome consists of a 20S proteasome core and two 19S regulatory subunits. The 20S proteasome core is composed of 28 subunits that are arranged in four stacked rings, resulting in a barrel-shaped structure. The two end rings are each formed by seven alpha subunits, and the two central rings are each formed by seven beta subunits. The catalytic chamber with the active sites is on the inside of the barrel. Interacts with ntc.

The protein resides in the cytoplasm. Its subcellular location is the nucleus. Its function is as follows. The proteasome is a multicatalytic proteinase complex which is characterized by its ability to cleave peptides with Arg, Phe, Tyr, Leu, and Glu adjacent to the leaving group at neutral or slightly basic pH. The proteasome has an ATP-dependent proteolytic activity. The sequence is that of Proteasome subunit alpha type-3 (Prosalpha7) from Drosophila melanogaster (Fruit fly).